Reading from the N-terminus, the 228-residue chain is 2-hydroxy-3-keto-5-methylthiopentenyl-1-phosphate phosphatase (228 aa).

Belongs to the HAD-like hydrolase superfamily. MtnX family.

It carries out the reaction 2-hydroxy-5-methylsulfanyl-3-oxopent-1-enyl phosphate + H2O = 1,2-dihydroxy-5-(methylsulfanyl)pent-1-en-3-one + phosphate. Its pathway is amino-acid biosynthesis; L-methionine biosynthesis via salvage pathway; L-methionine from S-methyl-5-thio-alpha-D-ribose 1-phosphate: step 4/6. Dephosphorylates 2-hydroxy-3-keto-5-methylthiopentenyl-1-phosphate (HK-MTPenyl-1-P) yielding 1,2-dihydroxy-3-keto-5-methylthiopentene (DHK-MTPene). This Lysinibacillus sphaericus (strain C3-41) protein is 2-hydroxy-3-keto-5-methylthiopentenyl-1-phosphate phosphatase.